A 435-amino-acid chain; its full sequence is Putative magnesium transporter MRS2-H (435 aa).

The interval 19 to 54 (FSSSPESRRCRSVHRVPSRPRPPLAPPARVMGKGNS) is disordered. 2 helical membrane-spanning segments follow: residues 369-389 (LTLIIASFGIAINTFIAAAFA) and 408-428 (FVGATSFLCMSIVILLFTYAW).

It belongs to the CorA metal ion transporter (MIT) (TC 1.A.35.5) family.

It is found in the membrane. In terms of biological role, putative magnesium transporter. The sequence is that of Putative magnesium transporter MRS2-H (MRS2-H) from Oryza sativa subsp. indica (Rice).